The primary structure comprises 652 residues: MRHLLLALLLLGGARADDEEKKEDVGTVVGIDLGTTYSCVGVFKNGRVEIIANDQGNRITPSYVAFTPEGERLIGDAAKNQLTSNPENTVFDAKRLIGRTWNDPSVQQDIKYLPFKVVEKKAKPHIQVDVGGGQTKTFAPEEISAMVLTKMKETAEAYLGKKVTHAVVTVPAYFNDAQRQATKDAGTIAGLNVMRIINEPTAAAIAYGLDKREGEKNILVFDLGGGTFDVSLLTIDNGVFEVVATNGDTHLGGEDFDQRVMEHFIKLYKKKTGKDVRKDNRAVQKLRREVEKAKRALSSQHQARIEIESFFEGEDFSETLTRAKFEELNMDLFRSTMKPVQKVLEDSDLKKSDIDEIVLVGGSTRIPKIQQLVKEFFNGKEPSRGINPDEAVAYGAAVQAGVLSGDQDTGDLVLLDVCPLTLGIETVGGVMTKLIPRNTVVPTKKSQIFSTASDNQPTVTIKVYEGERPLTKDNHLLGTFDLTGIPPAPRGVPQIEVTFEIDVNGILRVTAEDKGTGNKNKITITNDQNRLTPEEIERMVNDAEKFAEEDKKLKERIDARNELESYAYSLKNQIGDKEKLGGKLSSEDKETIEKAVEEKIEWLESHQDADIEDFKSKKKELEEVVQPIVSKLYGSAGPPPTGEEEAAEKDEL.

An N-terminal signal peptide occupies residues 1–16 (MRHLLLALLLLGGARA). ATP is bound by residues 34–37 (GTTY), K94, 225–227 (GGT), 291–298 (EKAKRALS), and 362–365 (GSTR). Residues 123 to 278 (KPHIQVDVGG…KKKTGKDVRK (156 aa)) are nucleotide-binding (NBD). Residues 407 to 417 (QDTGDLVLLDV) form an interdomain linker region. Residues 418 to 498 (CPLTLGIETV…PRGVPQIEVT (81 aa)) form a substrate-binding (SBD) region. Residues 630–652 (SKLYGSAGPPPTGEEEAAEKDEL) form a disordered region. Residues 642-652 (GEEEAAEKDEL) show a composition bias toward acidic residues. The Prevents secretion from ER motif lies at 649–652 (KDEL).

The protein belongs to the heat shock protein 70 family. As to quaternary structure, monomer and homooligomer; homooligomerization via the interdomain linker inactivates the chaperone activity and acts as a storage of HSPA5/BiP molecules. Interacts with DNAJC10. Interacts with DNAJB9/ERdj4; leading to recruit HSPA5/BiP to ERN1/IRE1. Interacts with ERN1/IRE1; interaction takes place following interaction with DNAJB9/ERdj4 and leads to inactivate ERN1/IRE1.

Its subcellular location is the endoplasmic reticulum lumen. The protein resides in the melanosome. The protein localises to the cytoplasm. It is found in the cell surface. It catalyses the reaction ATP + H2O = ADP + phosphate + H(+). Its activity is regulated as follows. The chaperone activity is regulated by ATP-induced allosteric coupling of the nucleotide-binding (NBD) and substrate-binding (SBD) domains. In the ADP-bound and nucleotide-free (apo) states, the two domains have little interaction. In contrast, in the ATP-bound state the two domains are tightly coupled, which results in drastically accelerated kinetics in both binding and release of polypeptide substrates. J domain-containing co-chaperones (DNAJB9/ERdj4 or DNAJC10/ERdj5) stimulate the ATPase activity and are required for efficient substrate recognition by HSPA5/BiP. Homooligomerization inactivates participating HSPA5/BiP protomers and probably act as reservoirs to store HSPA5/BiP molecules when they are not needed by the cell. Functionally, endoplasmic reticulum chaperone that plays a key role in protein folding and quality control in the endoplasmic reticulum lumen. Involved in the correct folding of proteins and degradation of misfolded proteins via its interaction with DNAJC10/ERdj5, probably to facilitate the release of DNAJC10/ERdj5 from its substrate. Acts as a key repressor of the EIF2AK3/PERK and ERN1/IRE1-mediated unfolded protein response (UPR). In the unstressed endoplasmic reticulum, recruited by DNAJB9/ERdj4 to the luminal region of ERN1/IRE1, leading to disrupt the dimerization of ERN1/IRE1, thereby inactivating ERN1/IRE1. Also binds and inactivates EIF2AK3/PERK in unstressed cells. Accumulation of misfolded protein in the endoplasmic reticulum causes release of HSPA5/BiP from ERN1/IRE1 and EIF2AK3/PERK, allowing their homodimerization and subsequent activation. May also play a role in apoptosis and cell proliferation. In Gallus gallus (Chicken), this protein is Endoplasmic reticulum chaperone BiP.